Consider the following 465-residue polypeptide: Clusterin-like protein 1 (465 aa).

Residues 1 to 20 (MKPSLLVFTVYLLWLKDCHC) form the signal peptide. Positions 62 to 106 (MMERREEEHTNLMKTLKKCKEEKQEALKLMNEVQEHLEEEESLCQ) form a coiled coil. Disulfide bonds link cysteine 105-cysteine 333, cysteine 116-cysteine 325, cysteine 119-cysteine 322, and cysteine 124-cysteine 315. N-linked (GlcNAc...) asparagine glycans are attached at residues asparagine 196, asparagine 257, asparagine 285, asparagine 311, asparagine 351, asparagine 412, and asparagine 430.

This sequence belongs to the clusterin family. As to expression, retina-specific (at protein level). In the light-adapted retina, expressed in the outer segment of cone photoreceptors. In the dark-adapted retina, strongly expressed in the outer plexiform layer in the region of contact between the cone pedicles and second order neurons with little or no expression in the cone photoreceptor outer segments.

It localises to the secreted. In Canis lupus familiaris (Dog), this protein is Clusterin-like protein 1 (CLUL1).